Here is a 235-residue protein sequence, read N- to C-terminus: Orotidine 5'-phosphate decarboxylase (235 aa).

Substrate contacts are provided by residues aspartate 17, lysine 39, 66–75, threonine 121, arginine 182, glutamine 191, glycine 211, and arginine 212; that span reads DLKLHDIGNT. Residue lysine 68 is the Proton donor of the active site.

This sequence belongs to the OMP decarboxylase family. Type 1 subfamily. As to quaternary structure, homodimer.

It catalyses the reaction orotidine 5'-phosphate + H(+) = UMP + CO2. The protein operates within pyrimidine metabolism; UMP biosynthesis via de novo pathway; UMP from orotate: step 2/2. Its function is as follows. Catalyzes the decarboxylation of orotidine 5'-monophosphate (OMP) to uridine 5'-monophosphate (UMP). In Rhodopseudomonas palustris (strain HaA2), this protein is Orotidine 5'-phosphate decarboxylase.